We begin with the raw amino-acid sequence, 334 residues long: Magnesium-chelatase 38 kDa subunit (334 aa).

36–43 (GDRGTGKS) provides a ligand contact to ATP.

The protein belongs to the Mg-chelatase subunits D/I family.

It carries out the reaction protoporphyrin IX + Mg(2+) + ATP + H2O = Mg-protoporphyrin IX + ADP + phosphate + 3 H(+). It participates in porphyrin-containing compound metabolism; bacteriochlorophyll biosynthesis. Functionally, involved in bacteriochlorophyll biosynthesis; introduces a magnesium ion into protoporphyrin IX to yield Mg-protoporphyrin IX. The polypeptide is Magnesium-chelatase 38 kDa subunit (bchI) (Cereibacter sphaeroides (strain ATCC 17023 / DSM 158 / JCM 6121 / CCUG 31486 / LMG 2827 / NBRC 12203 / NCIMB 8253 / ATH 2.4.1.) (Rhodobacter sphaeroides)).